Reading from the N-terminus, the 509-residue chain is ATP synthase subunit alpha (509 aa).

Position 171–178 (171–178) interacts with ATP; the sequence is GDRQTGKT.

This sequence belongs to the ATPase alpha/beta chains family. As to quaternary structure, F-type ATPases have 2 components, CF(1) - the catalytic core - and CF(0) - the membrane proton channel. CF(1) has five subunits: alpha(3), beta(3), gamma(1), delta(1), epsilon(1). CF(0) has three main subunits: a(1), b(2) and c(9-12). The alpha and beta chains form an alternating ring which encloses part of the gamma chain. CF(1) is attached to CF(0) by a central stalk formed by the gamma and epsilon chains, while a peripheral stalk is formed by the delta and b chains.

Its subcellular location is the cell inner membrane. The enzyme catalyses ATP + H2O + 4 H(+)(in) = ADP + phosphate + 5 H(+)(out). Functionally, produces ATP from ADP in the presence of a proton gradient across the membrane. The alpha chain is a regulatory subunit. The sequence is that of ATP synthase subunit alpha from Neorickettsia sennetsu (strain ATCC VR-367 / Miyayama) (Ehrlichia sennetsu).